Reading from the N-terminus, the 284-residue chain is 4-hydroxybenzoate octaprenyltransferase (284 aa).

A run of 8 helical transmembrane segments spans residues 16–36 (PIGI…ASDG), 40–60 (WTLV…GCAV), 91–111 (LLVA…LNTL), 132–152 (FFAI…PMGF), 157–177 (NTVP…SVAY), 207–227 (AIIM…GWQF), 231–251 (IWFV…YTLI), and 259–279 (CFAA…GVAL).

The protein belongs to the UbiA prenyltransferase family. It depends on Mg(2+) as a cofactor.

It is found in the cell inner membrane. It catalyses the reaction all-trans-octaprenyl diphosphate + 4-hydroxybenzoate = 4-hydroxy-3-(all-trans-octaprenyl)benzoate + diphosphate. Its pathway is cofactor biosynthesis; ubiquinone biosynthesis. In terms of biological role, catalyzes the prenylation of para-hydroxybenzoate (PHB) with an all-trans polyprenyl group. Mediates the second step in the final reaction sequence of ubiquinone-8 (UQ-8) biosynthesis, which is the condensation of the polyisoprenoid side chain with PHB, generating the first membrane-bound Q intermediate 3-octaprenyl-4-hydroxybenzoate. The sequence is that of 4-hydroxybenzoate octaprenyltransferase from Janthinobacterium sp. (strain Marseille) (Minibacterium massiliensis).